We begin with the raw amino-acid sequence, 144 residues long: Snaclec 6 (144 aa).

A signal peptide spans 1–23 (MGRFISVSFGLLVVFLSLSGTGA). 3 disulfides stabilise this stretch: C25-C36, C53-C142, and C119-C134. Residues 32–143 (HEGHCYKVFK…CNFIAPVVCK (112 aa)) enclose the C-type lectin domain.

This sequence belongs to the snaclec family. In terms of assembly, heterodimer; disulfide-linked.

Its subcellular location is the secreted. Its function is as follows. Interferes with one step of hemostasis (modulation of platelet aggregation, or coagulation cascade, for example). The protein is Snaclec 6 of Daboia siamensis (Eastern Russel's viper).